Reading from the N-terminus, the 90-residue chain is MATKKSGGSSSNGRDSRGRRLGVKKFGSELVIPGNIIIRQRGTRYHPGRNVGMGKDHTIFSKIAGVVCFRKRTGGKVFVDVVPQSCLSSV.

A compositionally biased stretch (low complexity) spans 1-13 (MATKKSGGSSSNG). Residues 1 to 20 (MATKKSGGSSSNGRDSRGRR) form a disordered region.

Belongs to the bacterial ribosomal protein bL27 family.

This Anaplasma marginale (strain Florida) protein is Large ribosomal subunit protein bL27.